The primary structure comprises 258 residues: 4-hydroxy-tetrahydrodipicolinate reductase (258 aa).

NAD(+) contacts are provided by residues 8–13, 86–88, and 110–113; these read GGSGKM, GTT, and ATNM. Histidine 142 functions as the Proton donor/acceptor in the catalytic mechanism. Residue histidine 143 coordinates (S)-2,3,4,5-tetrahydrodipicolinate. The active-site Proton donor is the lysine 146. 152-153 contributes to the (S)-2,3,4,5-tetrahydrodipicolinate binding site; it reads GT.

This sequence belongs to the DapB family.

It is found in the cytoplasm. The catalysed reaction is (S)-2,3,4,5-tetrahydrodipicolinate + NAD(+) + H2O = (2S,4S)-4-hydroxy-2,3,4,5-tetrahydrodipicolinate + NADH + H(+). The enzyme catalyses (S)-2,3,4,5-tetrahydrodipicolinate + NADP(+) + H2O = (2S,4S)-4-hydroxy-2,3,4,5-tetrahydrodipicolinate + NADPH + H(+). Its pathway is amino-acid biosynthesis; L-lysine biosynthesis via DAP pathway; (S)-tetrahydrodipicolinate from L-aspartate: step 4/4. Catalyzes the conversion of 4-hydroxy-tetrahydrodipicolinate (HTPA) to tetrahydrodipicolinate. The sequence is that of 4-hydroxy-tetrahydrodipicolinate reductase from Campylobacter hominis (strain ATCC BAA-381 / DSM 21671 / CCUG 45161 / LMG 19568 / NCTC 13146 / CH001A).